We begin with the raw amino-acid sequence, 253 residues long: Rab GTPase-activating protein 1-like, isoform 10 (253 aa).

A coiled-coil region spans residues 8-222; that stretch reads SMTFEERENR…MNEIQAAKNS (215 aa). Residues 233–253 form a disordered region; that stretch reads TATGTQPLQPAPVTQPPKEST.

The sequence is that of Rab GTPase-activating protein 1-like, isoform 10 (RABGAP1L) from Homo sapiens (Human).